The following is a 262-amino-acid chain: Transcription factor of morphogenesis MCM1 (262 aa).

Disordered stretches follow at residues 1 to 62 (MAIK…ERRK) and 140 to 262 (EEGL…QQYQ). The segment covering 17–35 (NSHSTNNNNNSNNSNSNNN) has biased composition (low complexity). One can recognise an MADS-box domain in the interval 58–118 (KERRKIEIKF…GLVYTFTTPK (61 aa)). The segment covering 150 to 170 (QSDGNTGDSPDQSPAPATNPN) has biased composition (polar residues). 3 stretches are compositionally biased toward low complexity: residues 182–198 (QQQQQQQQQAQQQAQQQ), 224–239 (PQQQGQHQPGIPLQGG), and 249–262 (NIQNNNIPNQQQYQ).

In terms of assembly, interacts with AHR1.

It is found in the nucleus. Its function is as follows. Transcription factor that is recruited by AHR1 to the promoters of genes involved in biofilm formation, which include several key adhesion genes. Plays an important role in cell adhesion, hyphal growth and virulence. Implicated in the regulation of opaque-phase-specific gene expression. This Candida albicans (strain SC5314 / ATCC MYA-2876) (Yeast) protein is Transcription factor of morphogenesis MCM1 (MCM1).